The chain runs to 874 residues: Leucine--tRNA ligase (874 aa).

The short motif at 47–57 is the 'HIGH' region element; that stretch reads PYPSGKLHMGH. The 'KMSKS' region motif lies at 636–640; it reads KMSKS. Position 639 (Lys639) interacts with ATP.

The protein belongs to the class-I aminoacyl-tRNA synthetase family.

It localises to the cytoplasm. The enzyme catalyses tRNA(Leu) + L-leucine + ATP = L-leucyl-tRNA(Leu) + AMP + diphosphate. The chain is Leucine--tRNA ligase from Acinetobacter baumannii (strain AB0057).